We begin with the raw amino-acid sequence, 470 residues long: Ribulose bisphosphate carboxylase large chain (470 aa).

Substrate-binding residues include N118 and T168. K170 acts as the Proton acceptor in catalysis. K172 serves as a coordination point for substrate. Mg(2+) contacts are provided by K196, D198, and E199. K196 carries the N6-carboxylysine modification. H289 acts as the Proton acceptor in catalysis. Residues R290, H322, and S374 each coordinate substrate.

It belongs to the RuBisCO large chain family. Type I subfamily. As to quaternary structure, heterohexadecamer of 8 large chains and 8 small chains; disulfide-linked. The disulfide link is formed within the large subunit homodimers. RuBisCO interacts with the C-terminus of CcmM, and can be found in complexes that also include carbonic anhydrase (ccaA). RuBisCO associates with both the internal and shell portion of carboxysomes. The cofactor is Mg(2+). The disulfide bond which can form in the large chain dimeric partners within the hexadecamer appears to be associated with oxidative stress and protein turnover.

It is found in the carboxysome. The enzyme catalyses 2 (2R)-3-phosphoglycerate + 2 H(+) = D-ribulose 1,5-bisphosphate + CO2 + H2O. It catalyses the reaction D-ribulose 1,5-bisphosphate + O2 = 2-phosphoglycolate + (2R)-3-phosphoglycerate + 2 H(+). In terms of biological role, ruBisCO catalyzes two reactions: the carboxylation of D-ribulose 1,5-bisphosphate, the primary event in carbon dioxide fixation, as well as the oxidative fragmentation of the pentose substrate in the photorespiration process. Both reactions occur simultaneously and in competition at the same active site. This is Ribulose bisphosphate carboxylase large chain from Synechocystis sp. (strain ATCC 27184 / PCC 6803 / Kazusa).